A 292-amino-acid chain; its full sequence is 4-hydroxybenzoate octaprenyltransferase (292 aa).

9 consecutive transmembrane segments (helical) span residues 24–44 (IGTL…NAGM), 47–67 (LTNF…GCVI), 97–117 (AISL…MLSV), 119–139 (TILL…MKRY), 145–165 (VVLG…SINA), 171–191 (WLLF…YAMV), 214–234 (HIIG…GALN), 238–258 (LSYW…QVLI), and 270–290 (FLNN…SYPV).

Belongs to the UbiA prenyltransferase family. The cofactor is Mg(2+).

Its subcellular location is the cell inner membrane. It catalyses the reaction all-trans-octaprenyl diphosphate + 4-hydroxybenzoate = 4-hydroxy-3-(all-trans-octaprenyl)benzoate + diphosphate. The protein operates within cofactor biosynthesis; ubiquinone biosynthesis. Catalyzes the prenylation of para-hydroxybenzoate (PHB) with an all-trans polyprenyl group. Mediates the second step in the final reaction sequence of ubiquinone-8 (UQ-8) biosynthesis, which is the condensation of the polyisoprenoid side chain with PHB, generating the first membrane-bound Q intermediate 3-octaprenyl-4-hydroxybenzoate. The polypeptide is 4-hydroxybenzoate octaprenyltransferase (Pseudoalteromonas translucida (strain TAC 125)).